A 465-amino-acid chain; its full sequence is Antithrombin-III (465 aa).

A signal peptide spans 1-32; that stretch reads MYSPGAGSGAAGERKLCLLSLLLIGALGCAIC. Cystine bridges form between cysteine 41–cysteine 161 and cysteine 54–cysteine 128. The residue at position 64 (threonine 64) is a Phosphothreonine. Residue serine 69 is modified to Phosphoserine. Residue tryptophan 82 coordinates heparin. An N-linked (GlcNAc...) asparagine glycan is attached at asparagine 129. Arginine 162 serves as a coordination point for heparin. A glycan (N-linked (GlcNAc...) asparagine) is linked at asparagine 168. Arginine 178 provides a ligand contact to heparin. N-linked (GlcNAc...) asparagine glycans are attached at residues asparagine 188 and asparagine 225. A disulfide bridge connects residues cysteine 280 and cysteine 463.

This sequence belongs to the serpin family. In terms of assembly, forms protease inhibiting heterodimer with TMPRSS7. Post-translationally, phosphorylated by FAM20C in the extracellular medium. As to expression, plasma.

The protein localises to the secreted. Its subcellular location is the extracellular space. Functionally, most important serine protease inhibitor in plasma that regulates the blood coagulation cascade. AT-III inhibits thrombin, matriptase-3/TMPRSS7, as well as factors IXa, Xa and XIa. Its inhibitory activity is greatly enhanced in the presence of heparin. The chain is Antithrombin-III (Serpinc1) from Mus musculus (Mouse).